We begin with the raw amino-acid sequence, 296 residues long: Uricase (296 aa).

Active-site charge relay system residues include lysine 14 and threonine 61. Residues threonine 61, aspartate 62, phenylalanine 163, arginine 180, valine 229, glutamine 230, and asparagine 256 each contribute to the urate site. The active-site Charge relay system is the histidine 258.

This sequence belongs to the uricase family.

The protein localises to the peroxisome. The protein resides in the cytoplasm. Its subcellular location is the nucleus. The enzyme catalyses urate + O2 + H2O = 5-hydroxyisourate + H2O2. The protein operates within purine metabolism; urate degradation; (S)-allantoin from urate: step 1/3. Its function is as follows. Catalyzes the oxidation of uric acid to 5-hydroxyisourate, which is further processed to form (S)-allantoin. The protein is Uricase of Schizosaccharomyces pombe (strain 972 / ATCC 24843) (Fission yeast).